A 190-amino-acid chain; its full sequence is Putative manganese efflux pump MntP (190 aa).

A run of 6 helical transmembrane segments spans residues 3–23, 41–61, 69–89, 105–125, 133–153, and 168–188; these read PISL…AALG, LIFG…GQVA, DHWI…YNGI, FWIL…VGVG, IVVA…IGVM, and IIGG…HLSA.

Belongs to the MntP (TC 9.B.29) family.

The protein resides in the cell inner membrane. Functionally, probably functions as a manganese efflux pump. This chain is Putative manganese efflux pump MntP, found in Pseudomonas syringae pv. syringae (strain B728a).